Reading from the N-terminus, the 156-residue chain is Large ribosomal subunit protein uL15 (156 aa).

The tract at residues G26–S46 is disordered. Positions T34–K43 are enriched in basic residues.

It belongs to the universal ribosomal protein uL15 family. In terms of assembly, part of the 50S ribosomal subunit.

Its function is as follows. Binds to the 23S rRNA. In Ehrlichia canis (strain Jake), this protein is Large ribosomal subunit protein uL15.